The chain runs to 293 residues: 4-hydroxy-tetrahydrodipicolinate synthase (293 aa).

Position 50 (Thr-50) interacts with pyruvate. Tyr-138 functions as the Proton donor/acceptor in the catalytic mechanism. Lys-166 serves as the catalytic Schiff-base intermediate with substrate. Residue Val-206 participates in pyruvate binding.

The protein belongs to the DapA family. Homotetramer; dimer of dimers.

The protein localises to the cytoplasm. The enzyme catalyses L-aspartate 4-semialdehyde + pyruvate = (2S,4S)-4-hydroxy-2,3,4,5-tetrahydrodipicolinate + H2O + H(+). The protein operates within amino-acid biosynthesis; L-lysine biosynthesis via DAP pathway; (S)-tetrahydrodipicolinate from L-aspartate: step 3/4. In terms of biological role, catalyzes the condensation of (S)-aspartate-beta-semialdehyde [(S)-ASA] and pyruvate to 4-hydroxy-tetrahydrodipicolinate (HTPA). This chain is 4-hydroxy-tetrahydrodipicolinate synthase, found in Cutibacterium acnes (strain DSM 16379 / KPA171202) (Propionibacterium acnes).